Here is a 43-residue protein sequence, read N- to C-terminus: Protein PsbN (43 aa).

A helical transmembrane segment spans residues 5-27 (ALVAISISRLLVSFTGYALYTAF).

It belongs to the PsbN family.

It is found in the plastid. Its subcellular location is the chloroplast thylakoid membrane. Its function is as follows. May play a role in photosystem I and II biogenesis. The protein is Protein PsbN of Bowenia serrulata (Byfield fern).